A 313-amino-acid polypeptide reads, in one-letter code: Olfactory receptor 10K1 (313 aa).

The Extracellular portion of the chain corresponds to 1-25 (MEQVNKTVVREFVVLGFSSLARLQQ). N-linked (GlcNAc...) asparagine glycosylation is present at N5. A helical transmembrane segment spans residues 26-46 (LLFVIFLLLYLFTLGTNAIII). Over 47–54 (STIVLDRA) the chain is Cytoplasmic. A helical membrane pass occupies residues 55–75 (LHTPMYFFLAILSCSEICYTF). Residues 76 to 99 (VIVPKMLVDLLSQKKTISFLGCAI) lie on the Extracellular side of the membrane. The helical transmembrane segment at 100-120 (QMFSFLFFGSSHSFLLAAMGY) threads the bilayer. The Cytoplasmic portion of the chain corresponds to 121–139 (DRYMAICNPLRYSVLMGHG). The helical transmembrane segment at 140–160 (VCMGLMAAACACGFTVSLVTT) threads the bilayer. Residues 161–197 (SLVFHLPFHSSNQLHHFFCDISPVLKLASQHSGFSQL) are Extracellular-facing. The helical transmembrane segment at 198–217 (VIFMLGVFALVIPLLLILVS) threads the bilayer. The Cytoplasmic segment spans residues 218-237 (YIRIISAILKIPSSVGRYKT). The helical transmembrane segment at 238 to 258 (FSTCASHLIVVTVHYSCASFI) threads the bilayer. The Extracellular segment spans residues 259-271 (YLRPKTNYTSSQD). N-linked (GlcNAc...) asparagine glycosylation is present at N265. Residues 272–292 (TLISVSYTILTPLFNPMIYSL) form a helical membrane-spanning segment. Topologically, residues 293-313 (RNKEFKSALRRTIGQTFYPLS) are cytoplasmic.

It belongs to the G-protein coupled receptor 1 family.

Its subcellular location is the cell membrane. In terms of biological role, odorant receptor. The protein is Olfactory receptor 10K1 (OR10K1) of Homo sapiens (Human).